We begin with the raw amino-acid sequence, 407 residues long: Argininosuccinate synthase (407 aa).

10–18 is a binding site for ATP; that stretch reads AYSGGLDTS. Tyrosine 88 and serine 93 together coordinate L-citrulline. Glycine 118 lines the ATP pocket. L-aspartate is bound by residues threonine 120, asparagine 124, and aspartate 125. Residue asparagine 124 participates in L-citrulline binding. Arginine 128, serine 177, serine 186, glutamate 263, and tyrosine 275 together coordinate L-citrulline.

It belongs to the argininosuccinate synthase family. Type 1 subfamily. As to quaternary structure, homotetramer.

It is found in the cytoplasm. It catalyses the reaction L-citrulline + L-aspartate + ATP = 2-(N(omega)-L-arginino)succinate + AMP + diphosphate + H(+). It participates in amino-acid biosynthesis; L-arginine biosynthesis; L-arginine from L-ornithine and carbamoyl phosphate: step 2/3. The chain is Argininosuccinate synthase from Clostridium botulinum (strain Alaska E43 / Type E3).